A 106-amino-acid polypeptide reads, in one-letter code: HIG1 domain family member 2A (106 aa).

Alanine 2 carries the N-acetylalanine modification. The HIG1 domain maps to 20–106; sequence VIEGFSPTVY…LAASAMKSQA (87 aa). The next 2 membrane-spanning stretches (helical) occupy residues 47–67 and 83–103; these read PMVP…LYCF and IAAQ…SAMK.

Associates with cytochrome c oxidase (COX, complex IV); proposed complex component.

The protein resides in the mitochondrion membrane. It localises to the mitochondrion inner membrane. Its function is as follows. Proposed subunit of cytochrome c oxidase (COX, complex IV), which is the terminal component of the mitochondrial respiratory chain that catalyzes the reduction of oxygen to water. May be involved in cytochrome c oxidase activity. May play a role in the assembly of respiratory supercomplexes. The sequence is that of HIG1 domain family member 2A (Higd2a) from Mus musculus (Mouse).